Here is a 446-residue protein sequence, read N- to C-terminus: Lysine histidine transporter 1 (446 aa).

Over 1–37 the chain is Cytoplasmic; it reads MVAQAPHDDHQDDEKLAAARQKEIEDWLPITSSRNAK. A helical membrane pass occupies residues 38–58; that stretch reads WWYSAFHNVTAMVGAGVLGLP. Over 59 to 63 the chain is Extracellular; sequence YAMSQ. Residues 64–84 form a helical membrane-spanning segment; the sequence is LGWGPGIAVLVLSWVITLYTL. The Cytoplasmic segment spans residues 85-115; it reads WQMVEMHEMVPGKRFDRYHELGQHAFGEKLG. Residues 116 to 136 form a helical membrane-spanning segment; that stretch reads LYIVVPQQLIVEIGVCIVYMV. Over 137–157 the chain is Extracellular; the sequence is TGGKSLKKFHELVCDDCKPIK. The helical transmembrane segment at 158–178 threads the bilayer; that stretch reads LTYFIMIFASVHFVLSHLPNF. The Cytoplasmic segment spans residues 179 to 180; the sequence is NS. A helical transmembrane segment spans residues 181-201; it reads ISGVSLAAAVMSLSYSTIAWA. The Extracellular portion of the chain corresponds to 202–227; it reads SSASKGVQEDVQYGYKAKTTAGTVFN. Residues 228 to 248 form a helical membrane-spanning segment; sequence FFSGLGDVAFAYAGHNVVLEI. Residues 249–268 lie on the Cytoplasmic side of the membrane; the sequence is QATIPSTPEKPSKGPMWRGV. The helical transmembrane segment at 269-289 threads the bilayer; that stretch reads IVAYIVVALCYFPVALVGYYI. Residues 290-305 lie on the Extracellular side of the membrane; the sequence is FGNGVEDNILMSLKKP. The helical transmembrane segment at 306-326 threads the bilayer; the sequence is AWLIATANIFVVIHVIGSYQI. Topologically, residues 327-352 are cytoplasmic; the sequence is YAMPVFDMMETLLVKKLNFRPTTTLR. The helical transmembrane segment at 353–375 threads the bilayer; the sequence is FFVRNFYVAATMFVGMTFPFFGG. Over 376-378 the chain is Extracellular; sequence LLA. The chain crosses the membrane as a helical span at residues 379-401; the sequence is FFGGFAFAPTTYFLPCVIWLAIY. Residues 402–409 are Cytoplasmic-facing; the sequence is KPKKYSLS. Residues 410–430 form a helical membrane-spanning segment; sequence WWANWVCIVFGLFLMVLSPIG. The Extracellular segment spans residues 431 to 446; sequence GLRTIVIQAKGYKFYS.

It belongs to the amino acid/polyamine transporter 2 family. Amino acid/auxin permease (AAAP) (TC 2.A.18.2) subfamily. In terms of tissue distribution, expressed in roots, stems, flowers, leaves, siliques and pollen. Found in the tips of roots and in the rhizodermis of emerging roots and in lateral roots. Higher expression in older leaves as compared to joung leaves. Detected first at the hydathodes, then in the epidermis and finally in matures leaves in all mesophyll cells. Not detected in vascular bundles or in seeds.

Its subcellular location is the cell membrane. Inhibited by carbonlycyanide m-chlorophenylhydrazone (CCCP) and DEPC. In terms of biological role, amino acid-proton symporter. Transporter with a broad specificity for histidine, lysine, glutamic acid, alanine, serine, proline and glycine. Involved in both apoplastic transport of amino acids in leaves and their uptake by roots. This is Lysine histidine transporter 1 (LHT1) from Arabidopsis thaliana (Mouse-ear cress).